The following is a 943-amino-acid chain: Protein translocase subunit SecA (943 aa).

ATP is bound by residues Gln-90, Gly-108 to Thr-112, and Asp-509. The segment at Pro-535–Lys-564 is disordered.

This sequence belongs to the SecA family. In terms of assembly, monomer and homodimer. Part of the essential Sec protein translocation apparatus which comprises SecA, SecYEG and auxiliary proteins SecDF. Other proteins may also be involved.

The protein resides in the cell inner membrane. The protein localises to the cellular thylakoid membrane. Its subcellular location is the cytoplasm. The enzyme catalyses ATP + H2O + cellular proteinSide 1 = ADP + phosphate + cellular proteinSide 2.. Its function is as follows. Part of the Sec protein translocase complex. Interacts with the SecYEG preprotein conducting channel. Has a central role in coupling the hydrolysis of ATP to the transfer of proteins into and across the cell membrane, serving as an ATP-driven molecular motor driving the stepwise translocation of polypeptide chains across the membrane. Probably participates in protein translocation into and across both the cytoplasmic and thylakoid membranes in cyanobacterial cells. The chain is Protein translocase subunit SecA from Prochlorococcus marinus (strain MIT 9215).